We begin with the raw amino-acid sequence, 259 residues long: Enolase-phosphatase E1 (259 aa).

Residues Asp16 and Glu18 each coordinate Mg(2+). Residues 151-152 (SS) and Lys185 contribute to the substrate site. Residue Asp210 coordinates Mg(2+).

This sequence belongs to the HAD-like hydrolase superfamily. MasA/MtnC family. Monomer. The cofactor is Mg(2+).

It is found in the cytoplasm. The protein resides in the nucleus. The enzyme catalyses 5-methylsulfanyl-2,3-dioxopentyl phosphate + H2O = 1,2-dihydroxy-5-(methylsulfanyl)pent-1-en-3-one + phosphate. It functions in the pathway amino-acid biosynthesis; L-methionine biosynthesis via salvage pathway; L-methionine from S-methyl-5-thio-alpha-D-ribose 1-phosphate: step 3/6. It participates in amino-acid biosynthesis; L-methionine biosynthesis via salvage pathway; L-methionine from S-methyl-5-thio-alpha-D-ribose 1-phosphate: step 4/6. In terms of biological role, bifunctional enzyme that catalyzes the enolization of 2,3-diketo-5-methylthiopentyl-1-phosphate (DK-MTP-1-P) into the intermediate 2-hydroxy-3-keto-5-methylthiopentenyl-1-phosphate (HK-MTPenyl-1-P), which is then dephosphorylated to form the acireductone 1,2-dihydroxy-3-keto-5-methylthiopentene (DHK-MTPene). The protein is Enolase-phosphatase E1 (enoph1) of Xenopus tropicalis (Western clawed frog).